The sequence spans 220 residues: Large ribosomal subunit protein uL4 (220 aa).

Residues Ala45–Arg102 form a disordered region. Residues Gly62–Gly73 are compositionally biased toward basic residues.

The protein belongs to the universal ribosomal protein uL4 family. Part of the 50S ribosomal subunit.

Its function is as follows. One of the primary rRNA binding proteins, this protein initially binds near the 5'-end of the 23S rRNA. It is important during the early stages of 50S assembly. It makes multiple contacts with different domains of the 23S rRNA in the assembled 50S subunit and ribosome. In terms of biological role, forms part of the polypeptide exit tunnel. This Corynebacterium aurimucosum (strain ATCC 700975 / DSM 44827 / CIP 107346 / CN-1) (Corynebacterium nigricans) protein is Large ribosomal subunit protein uL4.